The primary structure comprises 556 residues: MPPPRLLFFLLFLTPMEVRPEEPLVVKVEEGDNAVLQCLKGTSDGPTQQLTWSRESPLKPFLKLSLGLPGLGIHMRPLAIWLFIFNVSQQMGGFYLCQPGPPSEKAWQPGWTVNVEGSGELFRWNVSDLGGLGCGLKNRSSEGPSSPSGKLMSPKLYVWAKDRPEIWEGEPPCLPPRDSLNQSLSQDLTMAPGSTLWLSCGVPPDSVSRGPLSWTHVHPKGPKSLLSLELKDDRPARDMWVMETGLLLPRATAQDAGKYYCHRGNLTMSFHLEITARPVLWHWLLRTGGWKVSAVTLAYLIFCLCSLVGILHLQRALVLRRKRKRMTDPTRRFFKVTPPPGSGPQNQYGNVLSLPTPTSGLGRAQRWAAGLGGTAPSYGNPSSDVQADGALGSRSPPGVGPEEEEGEGYEEPDSEEDSEFYENDSNLGQDQLSQDGSGYENPEDEPLGPEDEDSFSNAESYENEDEELTQPVARTMDFLSPHGSAWDPSREATSLGSQSYEDMRGILYAAPQLRSIRGQPGPNHEEDADSYENMDNPDGPDPAWGGGGRMGTWSTR.

A signal peptide spans 1 to 19 (MPPPRLLFFLLFLTPMEVR). The Ig-like C2-type 1 domain maps to 20–113 (PEEPLVVKVE…EKAWQPGWTV (94 aa)). Residues 20-291 (PEEPLVVKVE…HWLLRTGGWK (272 aa)) lie on the Extracellular side of the membrane. 3 disulfides stabilise this stretch: Cys-38-Cys-261, Cys-97-Cys-200, and Cys-134-Cys-173. Asn-86, Asn-125, Asn-138, and Asn-181 each carry an N-linked (GlcNAc...) asparagine glycan. Positions 176-277 (PRDSLNQSLS…MSFHLEITAR (102 aa)) constitute an Ig-like C2-type 2 domain. The residue at position 227 (Ser-227) is a Phosphoserine. N-linked (GlcNAc...) asparagine glycosylation occurs at Asn-265. The chain crosses the membrane as a helical span at residues 292–313 (VSAVTLAYLIFCLCSLVGILHL). The Cytoplasmic portion of the chain corresponds to 314 to 556 (QRALVLRRKR…GGRMGTWSTR (243 aa)). 2 disordered regions span residues 329–355 (PTRR…LSLP) and 372–497 (GGTA…SLGS). The segment covering 343–355 (GPQNQYGNVLSLP) has biased composition (polar residues). Tyr-348, Tyr-378, and Tyr-409 each carry phosphotyrosine. The span at 401–422 (PEEEEGEGYEEPDSEEDSEFYE) shows a compositional bias: acidic residues. Over residues 423-436 (NDSNLGQDQLSQDG) the composition is skewed to polar residues. Phosphotyrosine is present on Tyr-439. Positions 441-454 (NPEDEPLGPEDEDS) are enriched in acidic residues. Tyr-500 and Tyr-531 each carry phosphotyrosine. The disordered stretch occupies residues 513–556 (LRSIRGQPGPNHEEDADSYENMDNPDGPDPAWGGGGRMGTWSTR).

Interacts with CR2/CD21. Part of a complex composed of CD19, CR2/CD21, CD81 and IFITM1/CD225 in the membrane of mature B-cells. Interacts directly with CD81 (via the second extracellular domain); this interaction is initiated early during biosynthesis in the ER/pre-Golgi compartments and is essential for trafficking and compartmentalization of CD19 receptor on the cell surface of activated B cells. Interacts with VAV. Interacts with GRB2 and SOS when phosphorylated on Tyr-348 and/or Tyr-378. Interacts with PLCG2 when phosphorylated on Tyr-409. Interacts with LYN. Interacts (when tyrosine phosphorylated) with the regulatory p85 subunit of phosphatidylinositol 3-kinase (PIK3R1 or PIK3R2). Interacts with GRB2. In terms of processing, phosphorylated on tyrosine following B-cell activation. Phosphorylated on tyrosine residues by LYN. Tyrosine residues are phosphorylated sequentially after activation of the B cell receptor. Phosphorylation of Tyr-531 is extremely rapid, followed by phosphorylation at Tyr-409. In contrast, phosphorylation of Tyr-500 appears more slowly and is more transient, returning rapidly to basal levels. Detected on marginal zone and germinal center B cells in lymph nodes. Detected on blood B cells (at protein level).

The protein resides in the cell membrane. Its subcellular location is the membrane raft. Its function is as follows. Functions as a coreceptor for the B-cell antigen receptor complex (BCR) on B-lymphocytes. Decreases the threshold for activation of downstream signaling pathways and for triggering B-cell responses to antigens. Activates signaling pathways that lead to the activation of phosphatidylinositol 3-kinase and the mobilization of intracellular Ca(2+) stores. Is not required for early steps during B cell differentiation in the blood marrow. Required for normal differentiation of B-1 cells. Required for normal B cell differentiation and proliferation in response to antigen challenges. Required for normal levels of serum immunoglobulins, and for production of high-affinity antibodies in response to antigen challenge. The sequence is that of B-lymphocyte antigen CD19 (CD19) from Homo sapiens (Human).